A 258-amino-acid chain; its full sequence is MRFLKKRGAVGIGTLIVFIAMVLVAAVAAAVLINTSGYLQQKSQSTGRQTTEEVASGIKVTSIVGYAPYDDSNKVYKPISKLAIYVSPNAGSAGIDMKKVRVILSDGSIEAVLKYDNSDADSDGTLDKDVFAVGMPDNVFEDDTGTTAYDGDQYITWSELNDKTFGIIVVQDSDGSLKPLTPTLNKGDIAIIAVRVGNYYVDSNGNLQAYSPTPDGVFGEGIKPNTHITGQVVPEHGAPGVIDFTTPSTYTQSVMELQ.

The propeptide occupies 1-8 (MRFLKKRG).

The protein belongs to the archaeal flagellin family.

The protein localises to the archaeal flagellum. Flagellin is the subunit protein which polymerizes to form the filaments of archaeal flagella. This Thermococcus kodakarensis (strain ATCC BAA-918 / JCM 12380 / KOD1) (Pyrococcus kodakaraensis (strain KOD1)) protein is Flagellin B3 (flaB3).